Reading from the N-terminus, the 229-residue chain is Cytidylate kinase (229 aa).

An ATP-binding site is contributed by 12–20 (GPSGAGKGT).

It belongs to the cytidylate kinase family. Type 1 subfamily.

Its subcellular location is the cytoplasm. It catalyses the reaction CMP + ATP = CDP + ADP. The enzyme catalyses dCMP + ATP = dCDP + ADP. The chain is Cytidylate kinase from Pseudomonas aeruginosa (strain UCBPP-PA14).